The sequence spans 714 residues: MFDVTTKSMQWGEETLTLESGKIARQADGSVVATLGETRVMANVTFAREQKPGQDFFPLTVHYQEKYYAAGKVPGGFFKREARPTEKETLTARLIDRPIRPLFVPGFKNEVLVMCTVLSHDLVNDPDIVAMIAASAALTISGVPFMGPIAGCRVGYVDGEYVLNPTVDDMQDLRLNPEQRLDLVVAGTKDAVMMVESEAYELTEAEMLGAVTFAHAQIQPVVDLIVSFAEQCAKEPFDFTPPDYSDLYAAVKAAGEEQMRAAFAITDKQERTAAVAAAREAIKAALTEEQLADGNLGSALKKLEAGILRGDVVKGGKRIDGRDTTTVRPIVAETGLLPRTHGSALFTRGETQGLVVTTLGTGDDEQFIDALHGNFKSNFLLHYNFPPYSVGEVGRVGSPGRREIGHGKLAWRALQAVLPAPTDFPYTIRVVSEITESNGSSSMASVCGGSLSMMDAGVPLKSAVAGVAMGLILEDDGSYAVLTDILGDEDHLGDMDFKVAGTENGITSLQMDIKVAGITPEIMEKALSQAKDGRMHILAEMNKALSGAADFSVHAPRIETMQIPTDKIREVIGSGGKVIREIVEVSGAKVDINDDGIIKIASPNGDSIKKAYDMIWSIVAEPEEGQVYTGKVVKIVDFGAFVNFFGKRDGLVHVSQIENRRLNHPSDVLKEGQEVKVKLLGFDDRGKVRLSMKVVDQETGEEIVPEKKEASEAE.

Residues Asp-490 and Asp-496 each contribute to the Mg(2+) site. The region spanning 556–615 is the KH domain; sequence PRIETMQIPTDKIREVIGSGGKVIREIVEVSGAKVDINDDGIIKIASPNGDSIKKAYDMI. The region spanning 625–693 is the S1 motif domain; that stretch reads GQVYTGKVVK…DRGKVRLSMK (69 aa).

This sequence belongs to the polyribonucleotide nucleotidyltransferase family. The cofactor is Mg(2+).

The protein resides in the cytoplasm. It carries out the reaction RNA(n+1) + phosphate = RNA(n) + a ribonucleoside 5'-diphosphate. Its function is as follows. Involved in mRNA degradation. Catalyzes the phosphorolysis of single-stranded polyribonucleotides processively in the 3'- to 5'-direction. This Ruegeria pomeroyi (strain ATCC 700808 / DSM 15171 / DSS-3) (Silicibacter pomeroyi) protein is Polyribonucleotide nucleotidyltransferase.